Here is a 287-residue protein sequence, read N- to C-terminus: uncharacterized protein (287 aa).

Transmembrane regions (helical) follow at residues 27-47 (LTFSVAAIGILFIFLIGFGVQ), 66-86 (LGTIAFVASLVSLILYFVTAF), 97-117 (WFWGLIIADVISYGITLGVLL), 135-155 (IVFAFLGAALVYGTVWGLSAL), 171-191 (IFIWAFFISIIASLLTFVLNF), 205-225 (LFPGLSLIVGGIFSLLSVYFV), and 254-274 (SALFFGAWLVSSFMNLVYFIL).

The protein localises to the cell membrane. This is an uncharacterized protein from Mycoplasma pneumoniae (strain ATCC 29342 / M129 / Subtype 1) (Mycoplasmoides pneumoniae).